The chain runs to 273 residues: Putative deoxyribonuclease TATDN1 homolog (273 aa).

The a divalent metal cation site is built by Glu91, His125, His147, and Asp195.

The protein belongs to the metallo-dependent hydrolases superfamily. TatD-type hydrolase family. It depends on a divalent metal cation as a cofactor.

The protein localises to the nucleus. Its function is as follows. Putative deoxyribonuclease. The polypeptide is Putative deoxyribonuclease TATDN1 homolog (Encephalitozoon cuniculi (strain GB-M1) (Microsporidian parasite)).